Here is a 179-residue protein sequence, read N- to C-terminus: Trypsin inhibitor (179 aa).

The residue at position 1 (glutamine 1) is a Pyrrolidone carboxylic acid. 2 disulfides stabilise this stretch: cysteine 40-cysteine 85 and cysteine 132-cysteine 143.

Belongs to the protease inhibitor I3 (leguminous Kunitz-type inhibitor) family. Heterodimer of an alpha and a beta chain linked by a disulfide bond. As to expression, abundant in dry seeds.

The protein resides in the secreted. Inhibits trypsin, plasmin, human plasma kallikrein, chymotrypsin and factor XIIa activity. The sequence is that of Trypsin inhibitor from Leucaena leucocephala (White popinac).